The chain runs to 244 residues: Probable transcriptional regulatory protein Xfasm12_1059 (244 aa).

Belongs to the TACO1 family.

The protein resides in the cytoplasm. The sequence is that of Probable transcriptional regulatory protein Xfasm12_1059 from Xylella fastidiosa (strain M12).